The following is a 445-amino-acid chain: 3-phosphoshikimate 1-carboxyvinyltransferase (445 aa).

Lysine 28, serine 29, and arginine 33 together coordinate 3-phosphoshikimate. Lysine 28 serves as a coordination point for phosphoenolpyruvate. Phosphoenolpyruvate is bound by residues glycine 101 and arginine 129. 3-phosphoshikimate contacts are provided by serine 175, glutamine 177, aspartate 328, and lysine 355. Glutamine 177 provides a ligand contact to phosphoenolpyruvate. Aspartate 328 (proton acceptor) is an active-site residue. Phosphoenolpyruvate contacts are provided by arginine 359 and arginine 402.

The protein belongs to the EPSP synthase family. Monomer.

It localises to the cytoplasm. It carries out the reaction 3-phosphoshikimate + phosphoenolpyruvate = 5-O-(1-carboxyvinyl)-3-phosphoshikimate + phosphate. The protein operates within metabolic intermediate biosynthesis; chorismate biosynthesis; chorismate from D-erythrose 4-phosphate and phosphoenolpyruvate: step 6/7. In terms of biological role, catalyzes the transfer of the enolpyruvyl moiety of phosphoenolpyruvate (PEP) to the 5-hydroxyl of shikimate-3-phosphate (S3P) to produce enolpyruvyl shikimate-3-phosphate and inorganic phosphate. The polypeptide is 3-phosphoshikimate 1-carboxyvinyltransferase (Rhodopseudomonas palustris (strain BisA53)).